The following is a 286-amino-acid chain: 4-hydroxybenzoate octaprenyltransferase (286 aa).

Transmembrane regions (helical) follow at residues 22–42, 45–65, 98–118, 143–163, 213–233, 238–255, and 266–286; these read IGTL…EKAM, LSVL…GCVI, LFIV…LYTI, FFLG…TIEA, IIAL…YLSQ, YFIV…QCRL, and NAFL…LFGI.

The protein belongs to the UbiA prenyltransferase family. The cofactor is Mg(2+).

It localises to the cell inner membrane. The enzyme catalyses all-trans-octaprenyl diphosphate + 4-hydroxybenzoate = 4-hydroxy-3-(all-trans-octaprenyl)benzoate + diphosphate. The protein operates within cofactor biosynthesis; ubiquinone biosynthesis. In terms of biological role, catalyzes the prenylation of para-hydroxybenzoate (PHB) with an all-trans polyprenyl group. Mediates the second step in the final reaction sequence of ubiquinone-8 (UQ-8) biosynthesis, which is the condensation of the polyisoprenoid side chain with PHB, generating the first membrane-bound Q intermediate 3-octaprenyl-4-hydroxybenzoate. The chain is 4-hydroxybenzoate octaprenyltransferase from Histophilus somni (strain 2336) (Haemophilus somnus).